The primary structure comprises 138 residues: Acidic phospholipase A2 RV-7 (138 aa).

An N-terminal signal peptide occupies residues 1–16; the sequence is MRTLWIVAVCLIGVEG. 7 disulfide bridges follow: Cys-42-Cys-131, Cys-44-Cys-60, Cys-59-Cys-111, Cys-65-Cys-138, Cys-66-Cys-104, Cys-73-Cys-97, and Cys-91-Cys-102. Tyr-43, Gly-45, and Gly-47 together coordinate Ca(2+). His-63 is a catalytic residue. Asp-64 provides a ligand contact to Ca(2+). The active site involves Asp-105.

The protein belongs to the phospholipase A2 family. Group II subfamily. D49 sub-subfamily. As to quaternary structure, heterodimer of a weakly toxic basic protein having phospholipase A2 activity (RV-4) and a non-toxic acidic protein which inhibits its enzymatic activity but potentiates its lethal potency and neurotoxicity (RV-7). The cofactor is Ca(2+). Expressed by the venom gland.

The protein localises to the secreted. It catalyses the reaction a 1,2-diacyl-sn-glycero-3-phosphocholine + H2O = a 1-acyl-sn-glycero-3-phosphocholine + a fatty acid + H(+). Functionally, heterodimer: RV-4/RV-7 targets the presynaptic sites of the neuromuscular junction. In terms of biological role, monomer: snake venom phospholipase A2 (PLA2) RV-7 that has low enzymatic activity and is not toxic. It inhibits the enzymatic activity of RV-4 in vitro but potentiates its lethal potency and neurotoxicity. It may facilitate the specific binding of RV-4 to its presynaptic binding sites, probably by acting as a chaperone, minimizing distraction and destruction of RV-4 en route to the site of action by reducing non-specific binding to muscle and other organs. PLA2 catalyzes the calcium-dependent hydrolysis of the 2-acyl groups in 3-sn-phosphoglycerides. The sequence is that of Acidic phospholipase A2 RV-7 from Daboia siamensis (Eastern Russel's viper).